We begin with the raw amino-acid sequence, 655 residues long: p-hydroxybenzoic acid efflux pump subunit AaeB (655 aa).

The next 11 membrane-spanning stretches (helical) occupy residues 13-33 (FAVKLASAIVLALFVGFHFQL), 38-58 (WAVLTAAIVAAGPAFAAGGEP), 69-89 (LRIIGTFIGCIAALTIIILMI), 93-113 (LLMVLVCCIWAGFCTWLSSLV), 121-141 (WGLAGYTALIIVITIQTEPLL), 152-172 (EIVIGIVCAIVADLLFSPRSI), 370-390 (LFWLWTGWTSGSGAMVMIAVV), 407-427 (FLYGTIAALPLGALYFLVILP), 431-451 (QSMLLLCISLAVMAFFIGIEV), 459-479 (LGALASTINILVLDNPMTFHF), and 482-502 (FLDSALGQLVGCFLAMMVILL).

This sequence belongs to the aromatic acid exporter ArAE (TC 2.A.85) family.

Its subcellular location is the cell inner membrane. Functionally, forms an efflux pump with AaeA. Could function as a metabolic relief valve, allowing to eliminate certain compounds when they accumulate to high levels in the cell. This chain is p-hydroxybenzoic acid efflux pump subunit AaeB, found in Enterobacter cloacae subsp. cloacae (strain ATCC 13047 / DSM 30054 / NBRC 13535 / NCTC 10005 / WDCM 00083 / NCDC 279-56).